A 480-amino-acid polypeptide reads, in one-letter code: MANARSQYRCSECRHVSAKWVGRCLECGRWGTVDEVAVLSAVGGTRRRSVAPASGAVPISAVDAHRTRPCPTGIDELDRVLGGGIVPGSVTLLAGDPGVGKSTLLLEVAHRWAQSGRRALYVSGEESAGQIRLRADRIGCGTEVEEIYLAAQSDVHTVLDQIETVQPALVIVDSVQTMSTSEADGVTGGVTQVRAVTAALTAAAKANEVALILVGHVTKDGAIAGPRSLEHLVDVVLHFEGDRNGALRMVRGVKNRFGAADEVGCFLLHDNGIDGIVDPSNLFLDQRPTPVAGTAITVTLDGKRPLVGEVQALLATPCGGSPRRAVSGIHQARAAMIAAVLEKHARLAIAVNDIYLSTVGGMRLTEPSADLAVAIALASAYANLPLPTTAVMIGEVGLAGDIRRVNGMARRLSEAARQGFTIALVPPSDDPVPPGMHALRASTIVAALQYMVDIADHRGTTLATPPSHSGTGHVPLGRGT.

The C4-type zinc finger occupies 10–27; sequence CSECRHVSAKWVGRCLEC. 95–102 provides a ligand contact to ATP; it reads GDPGVGKS. Residues 254–258 carry the RadA KNRFG motif motif; the sequence is KNRFG. Residues 353 to 480 form a lon-protease-like region; it reads DIYLSTVGGM…TGHVPLGRGT (128 aa). The interval 459-480 is disordered; that stretch reads GTTLATPPSHSGTGHVPLGRGT. The segment covering 461–470 has biased composition (polar residues); the sequence is TLATPPSHSG.

Belongs to the RecA family. RadA subfamily.

Its function is as follows. DNA-dependent ATPase involved in processing of recombination intermediates, plays a role in repairing DNA breaks. Stimulates the branch migration of RecA-mediated strand transfer reactions, allowing the 3' invading strand to extend heteroduplex DNA faster. Binds ssDNA in the presence of ADP but not other nucleotides, has ATPase activity that is stimulated by ssDNA and various branched DNA structures, but inhibited by SSB. Does not have RecA's homology-searching function. This Mycobacterium tuberculosis (strain CDC 1551 / Oshkosh) protein is DNA repair protein RadA.